The chain runs to 860 residues: Leucine--tRNA ligase (860 aa).

Positions 42-52 (PYPSGRLHMGH) match the 'HIGH' region motif. The short motif at 619–623 (KMSKS) is the 'KMSKS' region element. Residue Lys-622 participates in ATP binding.

Belongs to the class-I aminoacyl-tRNA synthetase family.

Its subcellular location is the cytoplasm. It catalyses the reaction tRNA(Leu) + L-leucine + ATP = L-leucyl-tRNA(Leu) + AMP + diphosphate. The chain is Leucine--tRNA ligase from Histophilus somni (strain 2336) (Haemophilus somnus).